Consider the following 356-residue polypeptide: UDP-N-acetylglucosamine--N-acetylmuramyl-(pentapeptide) pyrophosphoryl-undecaprenol N-acetylglucosamine transferase (356 aa).

Positions 166, 196, and 290 each coordinate UDP-N-acetyl-alpha-D-glucosamine.

It belongs to the glycosyltransferase 28 family. MurG subfamily.

It is found in the cell membrane. The enzyme catalyses Mur2Ac(oyl-L-Ala-gamma-D-Glu-L-Lys-D-Ala-D-Ala)-di-trans,octa-cis-undecaprenyl diphosphate + UDP-N-acetyl-alpha-D-glucosamine = beta-D-GlcNAc-(1-&gt;4)-Mur2Ac(oyl-L-Ala-gamma-D-Glu-L-Lys-D-Ala-D-Ala)-di-trans,octa-cis-undecaprenyl diphosphate + UDP + H(+). Its pathway is cell wall biogenesis; peptidoglycan biosynthesis. Functionally, cell wall formation. Catalyzes the transfer of a GlcNAc subunit on undecaprenyl-pyrophosphoryl-MurNAc-pentapeptide (lipid intermediate I) to form undecaprenyl-pyrophosphoryl-MurNAc-(pentapeptide)GlcNAc (lipid intermediate II). The polypeptide is UDP-N-acetylglucosamine--N-acetylmuramyl-(pentapeptide) pyrophosphoryl-undecaprenol N-acetylglucosamine transferase (Staphylococcus aureus (strain bovine RF122 / ET3-1)).